The chain runs to 160 residues: CST complex subunit STN1 (160 aa).

The OB DNA-binding region spans valine 41 to glutamate 133.

The protein belongs to the STN1 family. In terms of assembly, component of the CST complex, composed of CTC1, TEN1 and STN1. Interacts with CTC1. Interacts with TEN1. Interacts with POT1A. In vitro interaction with TEN1 and POT1A is mutually exclusive, indicating that POT1A and TEN1 may compete for the same binding site. As to expression, widely expressed.

Its subcellular location is the nucleus. It is found in the chromosome. It localises to the telomere. Component of the CST complex, a complex that binds to single-stranded DNA and is required to protect telomeres from DNA degradation. The CST complex binds single-stranded DNA with high affinity in a sequence-independent manner, while isolated subunits bind DNA with low affinity by themselves. Associates with enzymatically active telomerase. Plays a genomewide role in DNA replication and facilitates re-replication at non-telomeric loci. This Arabidopsis thaliana (Mouse-ear cress) protein is CST complex subunit STN1.